A 592-amino-acid polypeptide reads, in one-letter code: Cytosolic purine 5'-nucleotidase (592 aa).

Residues 1–15 (MAENNNNNNNNNNNN) show a composition bias toward low complexity. The segment at 1–37 (MAENNNNNNNNNNNNVSTPPHQKPHLTTGLRTSSSGL) is disordered. Asp-122 functions as the Nucleophile in the catalytic mechanism. IMP is bound by residues Asp-122 and Asp-124. Mg(2+) is bound by residues Asp-122 and Asp-124. Asp-124 serves as the catalytic Proton donor. An ATP-binding site is contributed by Asn-226. Positions 252–273 (LTEEVADEQQQMNSPPLSSLGS) are disordered. Residues 259-273 (EQQQMNSPPLSSLGS) show a composition bias toward polar residues. The IMP site is built by Arg-299, Asp-303, Lys-312, Thr-347, Asn-348, Ser-349, and Lys-385. Asp-444 provides a ligand contact to Mg(2+). ATP is bound by residues Gln-547 and Arg-550.

This sequence belongs to the 5'(3')-deoxyribonucleotidase family. In terms of assembly, homotetramer. Mg(2+) serves as cofactor.

The protein resides in the cytoplasm. The protein localises to the cytosol. It catalyses the reaction a ribonucleoside 5'-phosphate + H2O = a ribonucleoside + phosphate. It carries out the reaction a 2'-deoxyribonucleoside + a ribonucleoside 5'-phosphate = a ribonucleoside + a 2'-deoxyribonucleoside 5'-phosphate. Broad specificity cytosolic 5'-nucleotidase that catalyzes the dephosphorylation of 6-hydroxypurine nucleoside 5'-monophosphates. In addition, possesses a phosphotransferase activity by which it can transfer a phosphate from a donor nucleoside monophosphate to an acceptor nucleoside. Through these activities regulates the purine nucleoside/nucleotide pools within the cell. This is Cytosolic purine 5'-nucleotidase (nt5c2) from Dictyostelium discoideum (Social amoeba).